Consider the following 449-residue polypeptide: UDP-N-acetylmuramate--L-alanine ligase (449 aa).

121–127 (GAHGKSS) provides a ligand contact to ATP.

This sequence belongs to the MurCDEF family.

It is found in the cytoplasm. The enzyme catalyses UDP-N-acetyl-alpha-D-muramate + L-alanine + ATP = UDP-N-acetyl-alpha-D-muramoyl-L-alanine + ADP + phosphate + H(+). The protein operates within cell wall biogenesis; peptidoglycan biosynthesis. Its function is as follows. Cell wall formation. The polypeptide is UDP-N-acetylmuramate--L-alanine ligase (Helicobacter pylori (strain P12)).